A 268-amino-acid polypeptide reads, in one-letter code: Nickel import ATP-binding protein NikE (268 aa).

The ABC transporter domain maps to Leu4–Asn252. Gly45–Ser52 is an ATP binding site.

The protein belongs to the ABC transporter superfamily. Nickel importer (TC 3.A.1.5.3) family. The complex is composed of two ATP-binding proteins (NikD and NikE), two transmembrane proteins (NikB and NikC) and a solute-binding protein (NikA).

The protein resides in the cell inner membrane. It catalyses the reaction Ni(2+)(out) + ATP + H2O = Ni(2+)(in) + ADP + phosphate + H(+). Functionally, part of the ABC transporter complex NikABCDE involved in nickel import. Responsible for energy coupling to the transport system. This chain is Nickel import ATP-binding protein NikE, found in Shigella dysenteriae serotype 1 (strain Sd197).